Consider the following 239-residue polypeptide: MQLQKQDLLYKGKAKSVYETENSDYLILHFRDDTSAFNGERIEQLGRKGQVNNRFNAFIMQKLAEAGIETHFEKQLSDDEVLVKRLEMIPVECVVRNFAAGSLVRRLGLEEGQPLTPPTYELFFKDDALGDPMVNESLSVSLGWATPEQLAKMKELTFKVNDVLKELFDAGGLMLVDFKLEFGVFQDRIVLGDEFSPDGCRIWDKETKKKLDKDRFRQSLGDVIESYEEVAQRIGVPMN.

The protein belongs to the SAICAR synthetase family.

It catalyses the reaction 5-amino-1-(5-phospho-D-ribosyl)imidazole-4-carboxylate + L-aspartate + ATP = (2S)-2-[5-amino-1-(5-phospho-beta-D-ribosyl)imidazole-4-carboxamido]succinate + ADP + phosphate + 2 H(+). It participates in purine metabolism; IMP biosynthesis via de novo pathway; 5-amino-1-(5-phospho-D-ribosyl)imidazole-4-carboxamide from 5-amino-1-(5-phospho-D-ribosyl)imidazole-4-carboxylate: step 1/2. This Psychrobacter sp. (strain PRwf-1) protein is Phosphoribosylaminoimidazole-succinocarboxamide synthase.